The sequence spans 368 residues: Dihydroorotate dehydrogenase (quinone) (368 aa).

FMN contacts are provided by residues 67-71 (AGFDK) and T91. A substrate-binding site is contributed by K71. Residue 116–120 (NRMGF) coordinates substrate. FMN is bound by residues N146 and N179. Residue N179 coordinates substrate. Residue S182 is the Nucleophile of the active site. Residue N184 participates in substrate binding. 2 residues coordinate FMN: K222 and T250. Position 251-252 (251-252 (NT)) interacts with substrate. FMN-binding positions include G276, G305, and 326–327 (YS).

This sequence belongs to the dihydroorotate dehydrogenase family. Type 2 subfamily. In terms of assembly, monomer. It depends on FMN as a cofactor.

The protein localises to the cell membrane. The catalysed reaction is (S)-dihydroorotate + a quinone = orotate + a quinol. It participates in pyrimidine metabolism; UMP biosynthesis via de novo pathway; orotate from (S)-dihydroorotate (quinone route): step 1/1. Its function is as follows. Catalyzes the conversion of dihydroorotate to orotate with quinone as electron acceptor. The sequence is that of Dihydroorotate dehydrogenase (quinone) from Streptomyces coelicolor (strain ATCC BAA-471 / A3(2) / M145).